A 260-amino-acid polypeptide reads, in one-letter code: MILRSLSCRFLTIALCDAAEPWQLGFQDAATPMMQGIIDLHHDIFFFLILILVFVLWMLVRALWHFNEQTNPIPQRIVHGTTIEIIWTIFPSVILLFIAIPSFALLYSMDGVLVDPAITIKAIGHQWYWTYEYSDYNSSDEQSLTFDSYTIPEDDPELGQSRLLEVDNRVVVPAKTHLRMIVTPADVLHSWAVPSLGVKCDAVPGRLNLTSILVQREGVYYGQCSEICGTNHAFMPIVVEAVTLKDYADWVSNQLILQTN.

Topologically, residues 1-43 are mitochondrial intermembrane; sequence MILRSLSCRFLTIALCDAAEPWQLGFQDAATPMMQGIIDLHHD. Residues 44 to 64 traverse the membrane as a helical segment; sequence IFFFLILILVFVLWMLVRALW. Residues 65-84 are Mitochondrial matrix-facing; the sequence is HFNEQTNPIPQRIVHGTTIE. Residues 85–105 form a helical membrane-spanning segment; that stretch reads IIWTIFPSVILLFIAIPSFAL. At 106-260 the chain is on the mitochondrial intermembrane side; sequence LYSMDGVLVD…VSNQLILQTN (155 aa). Residues H189, C224, E226, C228, H232, and M235 each contribute to the Cu cation site. A Mg(2+)-binding site is contributed by E226.

Belongs to the cytochrome c oxidase subunit 2 family. As to quaternary structure, component of the cytochrome c oxidase (complex IV, CIV), a multisubunit enzyme composed of a catalytic core of 3 subunits and several supernumerary subunits. The complex exists as a monomer or a dimer and forms supercomplexes (SCs) in the inner mitochondrial membrane with ubiquinol-cytochrome c oxidoreductase (cytochrome b-c1 complex, complex III, CIII). It depends on Cu cation as a cofactor.

The protein localises to the mitochondrion inner membrane. It catalyses the reaction 4 Fe(II)-[cytochrome c] + O2 + 8 H(+)(in) = 4 Fe(III)-[cytochrome c] + 2 H2O + 4 H(+)(out). Component of the cytochrome c oxidase, the last enzyme in the mitochondrial electron transport chain which drives oxidative phosphorylation. The respiratory chain contains 3 multisubunit complexes succinate dehydrogenase (complex II, CII), ubiquinol-cytochrome c oxidoreductase (cytochrome b-c1 complex, complex III, CIII) and cytochrome c oxidase (complex IV, CIV), that cooperate to transfer electrons derived from NADH and succinate to molecular oxygen, creating an electrochemical gradient over the inner membrane that drives transmembrane transport and the ATP synthase. Cytochrome c oxidase is the component of the respiratory chain that catalyzes the reduction of oxygen to water. Electrons originating from reduced cytochrome c in the intermembrane space (IMS) are transferred via the dinuclear copper A center (CU(A)) of subunit 2 and heme A of subunit 1 to the active site in subunit 1, a binuclear center (BNC) formed by heme A3 and copper B (CU(B)). The BNC reduces molecular oxygen to 2 water molecules using 4 electrons from cytochrome c in the IMS and 4 protons from the mitochondrial matrix. This chain is Cytochrome c oxidase subunit 2 (COX2), found in Triticum aestivum (Wheat).